We begin with the raw amino-acid sequence, 208 residues long: MPDTQPNVSPNPIRRRGLGRDATVASICGLVVALMVGASFAAVPFYNWFCRTTGFNGTTQVAGVAPSSAPLARKVAVRFDSNINGLPWTFEPEQREIEVAIGQVFTAYYSVTNTAKHATTGQAAYNVTPLTVGSYFTKINCFCFTEQTLAAGETREMPVVFYVDPSFAADSENDAVKTITLSYTFYPVREPAPKPLASTAPDKRKGNL.

The Cytoplasmic segment spans residues 1–19 (MPDTQPNVSPNPIRRRGLG). The chain crosses the membrane as a helical; Signal-anchor for type II membrane protein span at residues 20-42 (RDATVASICGLVVALMVGASFAA). The Periplasmic portion of the chain corresponds to 43 to 208 (VPFYNWFCRT…TAPDKRKGNL (166 aa)).

The protein belongs to the COX11/CtaG family.

The protein localises to the cell inner membrane. Its function is as follows. Exerts its effect at some terminal stage of cytochrome c oxidase synthesis, probably by being involved in the insertion of the copper B into subunit I. The chain is Cytochrome c oxidase assembly protein CtaG from Rhodopseudomonas palustris (strain HaA2).